The chain runs to 186 residues: MHTQSFFSAAEEVMKRTIDRLKCELSSIRTGRVNSAAIETIKVESYGSIMPINQIASISVSDARTIEIRPWDVSQLSAIEKAILKADIGMSPANDGKLIRVSVPHLTQERRKEIAKSIGKMAEEFRVAIRNERRVLVENIKKLEKDKVITEDDKKKLEVEAQKVTDGYIKKIDDSIVVKEKEVMQV.

Belongs to the RRF family.

It localises to the cytoplasm. In terms of biological role, responsible for the release of ribosomes from messenger RNA at the termination of protein biosynthesis. May increase the efficiency of translation by recycling ribosomes from one round of translation to another. This is Ribosome-recycling factor from Endomicrobium trichonymphae.